A 114-amino-acid chain; its full sequence is ATP synthase subunit beta, mitochondrial (114 aa).

Position 44–51 (Gly44–Thr51) interacts with ATP.

Belongs to the ATPase alpha/beta chains family. As to quaternary structure, F-type ATPases have 2 components, CF(1) - the catalytic core - and CF(0) - the membrane proton channel. CF(1) has five subunits: alpha(3), beta(3), gamma(1), delta(1), epsilon(1). CF(0) has three main subunits: a, b and c.

Its subcellular location is the mitochondrion. It localises to the mitochondrion inner membrane. It carries out the reaction ATP + H2O + 4 H(+)(in) = ADP + phosphate + 5 H(+)(out). Mitochondrial membrane ATP synthase (F(1)F(0) ATP synthase or Complex V) produces ATP from ADP in the presence of a proton gradient across the membrane which is generated by electron transport complexes of the respiratory chain. F-type ATPases consist of two structural domains, F(1) - containing the extramembraneous catalytic core, and F(0) - containing the membrane proton channel, linked together by a central stalk and a peripheral stalk. During catalysis, ATP synthesis in the catalytic domain of F(1) is coupled via a rotary mechanism of the central stalk subunits to proton translocation. Subunits alpha and beta form the catalytic core in F(1). Rotation of the central stalk against the surrounding alpha(3)beta(3) subunits leads to hydrolysis of ATP in three separate catalytic sites on the beta subunits. In Penicillium glabrum (Penicillium frequentans), this protein is ATP synthase subunit beta, mitochondrial (atp2).